The following is a 504-amino-acid chain: Arabinose import ATP-binding protein AraG (504 aa).

2 ABC transporter domains span residues 8-243 (LSFR…MVGR) and 256-499 (YGEE…MPKV). 40–47 (GENGAGKS) is an ATP binding site.

It belongs to the ABC transporter superfamily. Arabinose importer (TC 3.A.1.2.2) family. The complex is composed of two ATP-binding proteins (AraG), two transmembrane proteins (AraH) and a solute-binding protein (AraF).

It localises to the cell inner membrane. It carries out the reaction L-arabinose(out) + ATP + H2O = L-arabinose(in) + ADP + phosphate + H(+). Functionally, part of the ABC transporter complex AraFGH involved in arabinose import. Responsible for energy coupling to the transport system. The protein is Arabinose import ATP-binding protein AraG of Shigella boydii serotype 4 (strain Sb227).